A 254-amino-acid polypeptide reads, in one-letter code: Nickel import ATP-binding protein NikD (254 aa).

The ABC transporter domain maps to 2–241; that stretch reads PQQIELRNIA…PKHTVTRSLV (240 aa). 36–43 provides a ligand contact to ATP; that stretch reads GGSGSGKS.

This sequence belongs to the ABC transporter superfamily. Nickel importer (TC 3.A.1.5.3) family. In terms of assembly, the complex is composed of two ATP-binding proteins (NikD and NikE), two transmembrane proteins (NikB and NikC) and a solute-binding protein (NikA).

It localises to the cell inner membrane. The catalysed reaction is Ni(2+)(out) + ATP + H2O = Ni(2+)(in) + ADP + phosphate + H(+). In terms of biological role, part of the ABC transporter complex NikABCDE involved in nickel import. Responsible for energy coupling to the transport system. This Shigella flexneri serotype 5b (strain 8401) protein is Nickel import ATP-binding protein NikD.